Consider the following 152-residue polypeptide: Cytochrome c-type biogenesis CcmH-like mitochondrial protein (152 aa).

At 1 to 83 the chain is on the mitochondrial intermembrane side; sequence MATEEDVKQR…ILYTPKFDLQ (83 aa). Residues C26 and C29 each contribute to the heme site. Residues 84 to 104 traverse the membrane as a helical segment; it reads TAAIWLSPVIVGGVAAGVWAY. The Mitochondrial matrix segment spans residues 105–152; it reads KKHRQRTNVHIMALNLVRGVPLTPREKETMLDVLTPPPPANKWWWPGK.

This sequence belongs to the CcmH/CycL/Ccl2/NrfF family.

The protein resides in the mitochondrion inner membrane. Functionally, plays a role in mitochondrial cytochrome c maturation. Probable component of a heme lyase complex involved in the reduction of apocytochrome c. This is Cytochrome c-type biogenesis CcmH-like mitochondrial protein from Oryza sativa subsp. indica (Rice).